The following is a 1037-amino-acid chain: Outer dynein arm-docking complex subunit 2 (1037 aa).

Basic and acidic residues-rich tracts occupy residues 316 to 334 and 376 to 391; these read EEQQ…EDGH and SSIK…KLEK. Disordered stretches follow at residues 316–353 and 376–439; these read EEQQ…FGKS and SSIK…ANAD. ARM repeat units follow at residues 477–516, 518–557, 528–570, 615–654, 656–695, 739–778, 821–860, 864–903, 905–944, and 946–985; these read ETCQ…EISH, PQIR…NVAK, GGLP…QHGG, HSNK…ECAS, ENYR…QCAE, KENV…ECCQ, PESM…PCIE, DAGE…NIAK, QENL…RCCM, and GRNR…QLSE. At lysine 545 the chain carries N6-methyllysine.

As to quaternary structure, component of the outer dynein arm-docking complex along with ODAD1, ODAD3, and ODAD4. Interacts with CFAP61. Highly expressed in testis. In males, also detected at lower levels in lung, brain, liver and muscle. In females, detected in ovary.

The protein localises to the cytoplasm. It is found in the cytoskeleton. The protein resides in the cilium axoneme. It localises to the cilium basal body. In terms of biological role, component of the outer dynein arm-docking complex (ODA-DC) that mediates outer dynein arms (ODA) binding onto the doublet microtubule. Involved in mediating assembly of both ODAs and their axonemal docking complex onto ciliary microtubules. The polypeptide is Outer dynein arm-docking complex subunit 2 (Mus musculus (Mouse)).